The primary structure comprises 310 residues: Olfactory receptor 2A4 (310 aa).

Residues 1–24 lie on the Extracellular side of the membrane; that stretch reads MGDNITSIREFLLLGFPVGPRIQM. Asn4 is a glycosylation site (N-linked (GlcNAc...) asparagine). A helical transmembrane segment spans residues 25–48; the sequence is LLFGLFSLFYVFTLLGNGTILGLI. Over 49–56 the chain is Cytoplasmic; the sequence is SLDSRLHA. A helical transmembrane segment spans residues 57–78; the sequence is PMYFFLSHLAVVDIAYACNTVP. Over 79 to 99 the chain is Extracellular; it reads RMLVNLLHPAKPISFAGRMMQ. Residues 100–119 traverse the membrane as a helical segment; sequence TFLFSTFAVTECLLLVVMSY. Residues 120–138 lie on the Cytoplasmic side of the membrane; sequence DLYVAICHPLRYLAIMTWR. A helical membrane pass occupies residues 139–157; sequence VCITLAVTSWTTGVLLSLI. At 158 to 194 the chain is on the extracellular side; it reads HLVLLLPLPFCRPQKIYHFFCEILAVLKLACADTHIN. Residues 195 to 218 form a helical membrane-spanning segment; it reads ENMVLAGAISGLVGPLSTIVVSYM. The Cytoplasmic segment spans residues 219–235; sequence CILCAILQIQSREVQRK. The chain crosses the membrane as a helical span at residues 236–258; the sequence is AFRTCFSHLCVIGLVYGTAIIMY. Residues 259-271 lie on the Extracellular side of the membrane; that stretch reads VGPRYGNPKEQKK. A helical transmembrane segment spans residues 272–291; sequence YLLLFHSLFNPMLNPLICSL. Residues 292–310 lie on the Cytoplasmic side of the membrane; it reads RNSEVKNTLKRVLGVERAL.

This sequence belongs to the G-protein coupled receptor 1 family.

Its subcellular location is the cell membrane. Its function is as follows. Odorant receptor. This Homo sapiens (Human) protein is Olfactory receptor 2A4 (OR2A4).